Reading from the N-terminus, the 287-residue chain is Bifunctional protein FolD (287 aa).

Residues 160–162 (GRS), Ser189, and Ile230 contribute to the NADP(+) site.

It belongs to the tetrahydrofolate dehydrogenase/cyclohydrolase family. In terms of assembly, homodimer.

The enzyme catalyses (6R)-5,10-methylene-5,6,7,8-tetrahydrofolate + NADP(+) = (6R)-5,10-methenyltetrahydrofolate + NADPH. It catalyses the reaction (6R)-5,10-methenyltetrahydrofolate + H2O = (6R)-10-formyltetrahydrofolate + H(+). It functions in the pathway one-carbon metabolism; tetrahydrofolate interconversion. Its function is as follows. Catalyzes the oxidation of 5,10-methylenetetrahydrofolate to 5,10-methenyltetrahydrofolate and then the hydrolysis of 5,10-methenyltetrahydrofolate to 10-formyltetrahydrofolate. The chain is Bifunctional protein FolD from Chlamydia felis (strain Fe/C-56) (Chlamydophila felis).